The primary structure comprises 350 residues: Biotin synthase (350 aa).

The 228-residue stretch at 41-268 (NEVQVSRLLS…KSRVRLSAGR (228 aa)) folds into the Radical SAM core domain. [4Fe-4S] cluster is bound by residues C56, C60, and C63. 4 residues coordinate [2Fe-2S] cluster: C100, C131, C191, and R263.

Belongs to the radical SAM superfamily. Biotin synthase family. Homodimer. [4Fe-4S] cluster serves as cofactor. [2Fe-2S] cluster is required as a cofactor.

The enzyme catalyses (4R,5S)-dethiobiotin + (sulfur carrier)-SH + 2 reduced [2Fe-2S]-[ferredoxin] + 2 S-adenosyl-L-methionine = (sulfur carrier)-H + biotin + 2 5'-deoxyadenosine + 2 L-methionine + 2 oxidized [2Fe-2S]-[ferredoxin]. Its pathway is cofactor biosynthesis; biotin biosynthesis; biotin from 7,8-diaminononanoate: step 2/2. In terms of biological role, catalyzes the conversion of dethiobiotin (DTB) to biotin by the insertion of a sulfur atom into dethiobiotin via a radical-based mechanism. The chain is Biotin synthase from Shewanella pealeana (strain ATCC 700345 / ANG-SQ1).